A 260-amino-acid chain; its full sequence is 3-methyl-2-oxobutanoate hydroxymethyltransferase (260 aa).

The Mg(2+) site is built by Asp42 and Asp81. 3-methyl-2-oxobutanoate-binding positions include 42–43, Asp81, and Lys109; that span reads DS. Glu111 is a binding site for Mg(2+). Residue Glu178 is the Proton acceptor of the active site.

The protein belongs to the PanB family. In terms of assembly, homodecamer; pentamer of dimers. The cofactor is Mg(2+).

It localises to the cytoplasm. It carries out the reaction 3-methyl-2-oxobutanoate + (6R)-5,10-methylene-5,6,7,8-tetrahydrofolate + H2O = 2-dehydropantoate + (6S)-5,6,7,8-tetrahydrofolate. Its pathway is cofactor biosynthesis; (R)-pantothenate biosynthesis; (R)-pantoate from 3-methyl-2-oxobutanoate: step 1/2. Catalyzes the reversible reaction in which hydroxymethyl group from 5,10-methylenetetrahydrofolate is transferred onto alpha-ketoisovalerate to form ketopantoate. This chain is 3-methyl-2-oxobutanoate hydroxymethyltransferase, found in Vesicomyosocius okutanii subsp. Calyptogena okutanii (strain HA).